The chain runs to 271 residues: Transcription factor PU.1 (271 aa).

The disordered stretch occupies residues 124–164 (LSPAHQQSSDEEEGERQSPPLEVSDGEADGLEPGPGLLHGE). Phosphoserine occurs at positions 141 and 147. Residues 154–164 (LEPGPGLLHGE) show a composition bias toward low complexity. A DNA-binding region (ETS) is located at residues 171–254 (IRLYQFLLDL…VKKKLTYQFS (84 aa)). DNA is bound by residues K218, R231, R234, and K244.

This sequence belongs to the ETS family. In terms of assembly, binds DNA as a monomer. Can form homomers. Directly interacts with CEBPD/NF-IL6-beta; this interaction does not affect DNA-binding properties of each partner. Interacts with NONO/p54(nrb). Interacts with RUNX1/AML1. Interacts with GFI1; the interaction represses SPI1 transcriptional activity, hence blocks SPI1-induced macrophage differentiation of myeloid progenitor cells. Interacts with CEBPE. Interacts with IRF4/Pip and IRF8. Interacts with JUN. Interacts with RB1. Interacts with TBP.

Its subcellular location is the nucleus. Transcriptional activity at macrophage-specific genes is inhibited by interaction with GFI1, which results in the inhibition of SPI1-induced macrophage differentiation of myeloid progenitor cells, but not that of the granulocyte lineage. Functionally, pioneer transcription factor, which controls hematopoietic cell fate by decompacting stem cell heterochromatin and allowing other transcription factors to enter otherwise inaccessible genomic sites. Once in open chromatin, can directly control gene expression by binding genetic regulatory elements and can also more broadly influence transcription by recruiting transcription factors, such as interferon regulatory factors (IRFs), to otherwise inaccessible genomic regions. Transcriptionally activates genes important for myeloid and lymphoid lineages, such as CSF1R or FCER1A. Transcriptional activation from certain promoters, possibly containing low affinity binding sites, is achieved cooperatively with other transcription factors. FCER1A transactivation is achieved in cooperation with GATA1. May be particularly important for the pro- to pre-B cell transition. Binds (via the ETS domain) onto the purine-rich DNA core sequence 5'-GAGGAA-3', also known as the PU-box. In vitro can bind RNA and interfere with pre-mRNA splicing. This chain is Transcription factor PU.1 (Spi1), found in Rattus norvegicus (Rat).